Here is a 146-residue protein sequence, read N- to C-terminus: D-aminoacyl-tRNA deacylase (146 aa).

Residues 138-139 (GP) carry the Gly-cisPro motif, important for rejection of L-amino acids motif.

This sequence belongs to the DTD family. Homodimer.

The protein localises to the cytoplasm. The catalysed reaction is glycyl-tRNA(Ala) + H2O = tRNA(Ala) + glycine + H(+). The enzyme catalyses a D-aminoacyl-tRNA + H2O = a tRNA + a D-alpha-amino acid + H(+). In terms of biological role, an aminoacyl-tRNA editing enzyme that deacylates mischarged D-aminoacyl-tRNAs. Also deacylates mischarged glycyl-tRNA(Ala), protecting cells against glycine mischarging by AlaRS. Acts via tRNA-based rather than protein-based catalysis; rejects L-amino acids rather than detecting D-amino acids in the active site. By recycling D-aminoacyl-tRNA to D-amino acids and free tRNA molecules, this enzyme counteracts the toxicity associated with the formation of D-aminoacyl-tRNA entities in vivo and helps enforce protein L-homochirality. The polypeptide is D-aminoacyl-tRNA deacylase (Tolumonas auensis (strain DSM 9187 / NBRC 110442 / TA 4)).